Reading from the N-terminus, the 348-residue chain is Fructose-1,6-bisphosphatase class 1 (348 aa).

Mg(2+) is bound by residues E92, D111, L113, and D114. Substrate is bound by residues 114–117 and N204; that span reads DGSS. E276 is a Mg(2+) binding site.

It belongs to the FBPase class 1 family. In terms of assembly, homotetramer. Requires Mg(2+) as cofactor.

The protein localises to the cytoplasm. The enzyme catalyses beta-D-fructose 1,6-bisphosphate + H2O = beta-D-fructose 6-phosphate + phosphate. Its pathway is carbohydrate biosynthesis; gluconeogenesis. This chain is Fructose-1,6-bisphosphatase class 1, found in Methylorubrum populi (strain ATCC BAA-705 / NCIMB 13946 / BJ001) (Methylobacterium populi).